The following is a 356-amino-acid chain: UDP-3-O-acylglucosamine N-acyltransferase (356 aa).

Catalysis depends on histidine 251, which acts as the Proton acceptor.

The protein belongs to the transferase hexapeptide repeat family. LpxD subfamily. As to quaternary structure, homotrimer.

It catalyses the reaction a UDP-3-O-[(3R)-3-hydroxyacyl]-alpha-D-glucosamine + a (3R)-hydroxyacyl-[ACP] = a UDP-2-N,3-O-bis[(3R)-3-hydroxyacyl]-alpha-D-glucosamine + holo-[ACP] + H(+). It participates in bacterial outer membrane biogenesis; LPS lipid A biosynthesis. Its function is as follows. Catalyzes the N-acylation of UDP-3-O-acylglucosamine using 3-hydroxyacyl-ACP as the acyl donor. Is involved in the biosynthesis of lipid A, a phosphorylated glycolipid that anchors the lipopolysaccharide to the outer membrane of the cell. The protein is UDP-3-O-acylglucosamine N-acyltransferase of Ralstonia nicotianae (strain ATCC BAA-1114 / GMI1000) (Ralstonia solanacearum).